The sequence spans 507 residues: Cytochrome c-552 (507 aa).

The N-terminal stretch at 1–22 is a signal peptide; sequence MTKFKLLLAGSLVAIVSMGLLA. Heme c is bound by residues H102, C130, C133, K134, C168, C171, H172, C211, C214, and H215. E217, Y218, K274, and Q276 together coordinate Ca(2+). Y218 provides a ligand contact to substrate. H277 serves as a coordination point for substrate. Heme c contacts are provided by H288, C295, C298, H299, H313, C326, C329, H330, and H405.

The protein belongs to the cytochrome c-552 family. Homodimer. Interacts with NrfH. May form a heterotetramer with NrfH. The cofactor is Ca(2+). Heme c is required as a cofactor.

It localises to the periplasm. It catalyses the reaction 6 Fe(III)-[cytochrome c] + NH4(+) + 2 H2O = 6 Fe(II)-[cytochrome c] + nitrite + 8 H(+). It participates in nitrogen metabolism; nitrate reduction (assimilation). Catalyzes the reduction of nitrite to ammonia, consuming six electrons in the process. Has very low activity toward hydroxylamine, and even lower activity toward sulfite. Sulfite reductase activity is maximal at neutral pH. This Wolinella succinogenes (strain ATCC 29543 / DSM 1740 / CCUG 13145 / JCM 31913 / LMG 7466 / NCTC 11488 / FDC 602W) (Vibrio succinogenes) protein is Cytochrome c-552 (nrfA).